The chain runs to 2748 residues: Nuclear migration protein NUM1 (2748 aa).

A compositionally biased stretch (basic residues) spans 1 to 10 (MSHNNRHKKN). Disordered stretches follow at residues 1–36 (MSHNNRHKKNNDKDSSAGQYANSIDNSLSQESVSTN) and 290–312 (YYQKQHTSDTTVTSDPDSEGTTS). A compositionally biased stretch (polar residues) spans 17–36 (AGQYANSIDNSLSQESVSTN). Residues 293–304 (KQHTSDTTVTSD) show a composition bias toward low complexity. 12 repeat units span residues 593–656 (PSLE…KLEQ), 657–727 (PSLE…EVEQ), 728–798 (PSLA…EVEQ), 799–862 (PSLA…KLEQ), 863–926 (PSLA…KLEQ), 927–990 (PSLA…KLEQ), 991–1054 (PSLE…KLEQ), 1055–1118 (PSLE…KLEQ), 1119–1182 (PSLE…KLEQ), 1183–1246 (PSLA…KLEQ), 1247–1310 (PSLA…KLEQ), and 1311–1374 (PSLE…KLEQ). Positions 593 to 1384 (PSLEYLVEHA…PSLEYLVKHA (792 aa)) are 13 X tandem repeats. 3 positions are modified to phosphoserine: Ser611, Ser675, and Ser746. Residues Ser881, Ser945, and Ser1009 each carry the phosphoserine modification. Phosphoserine occurs at positions 1201, 1265, and 1329. A 13; truncated repeat occupies 1375–1384 (PSLEYLVKHA). Residues 2111–2133 (ERAERIDEQSINTTSSNSTTTSS) form a disordered region. Residues 2122–2133 (NTTSSNSTTTSS) are compositionally biased toward low complexity. Ser2162, Ser2164, Ser2197, Ser2217, Ser2220, Ser2221, Ser2360, and Ser2424 each carry phosphoserine. Residues 2444 to 2460 (KEDKKGQATASKHEYVS) show a composition bias toward basic and acidic residues. Positions 2444-2536 (KEDKKGQATA…HSSRNTPASR (93 aa)) are disordered. Residues 2465 to 2474 (NKTSTVSTKS) are compositionally biased toward polar residues. Positions 2492 to 2503 (SESHPQIEEQSH) are enriched in basic and acidic residues. Phosphoserine is present on Ser2494. Positions 2504-2514 (RTNHHKHHKRQ) are enriched in basic residues. Residues 2516 to 2532 (SLNSNSTSKTTHSSRNT) are compositionally biased toward low complexity. The residue at position 2545 (Ser2545) is a Phosphoserine. The PH domain occupies 2573 to 2683 (QTVIGEYLFK…WYNSLRYLLQ (111 aa)). The segment at 2707-2748 (IFPLPGENTKSSSKRLSASRRSVSTRSLRHRVPQSRSFGNLR) is disordered. The span at 2720–2730 (KRLSASRRSVS) shows a compositional bias: low complexity.

In terms of assembly, interacts with PAC11 when DYN1 is present, and TUB3.

It localises to the bud tip. Controls nuclear migration. NUM1 specifically controls the interaction of the bud neck cytoskeleton with the pre-divisional G2 nucleus. Functions in dynein-anchoring. During late anaphase forms dynein-interacting cortical microtubule capture sites at both cellular poles. This leads to dynein-dependent sliding of the microtubules in the bud. This chain is Nuclear migration protein NUM1 (NUM1), found in Saccharomyces cerevisiae (strain ATCC 204508 / S288c) (Baker's yeast).